A 92-amino-acid chain; its full sequence is Large ribosomal subunit protein eL34 (92 aa).

It belongs to the eukaryotic ribosomal protein eL34 family.

This is Large ribosomal subunit protein eL34 from Staphylothermus marinus (strain ATCC 43588 / DSM 3639 / JCM 9404 / F1).